The chain runs to 154 residues: UPF0260 protein HI_1355 (154 aa).

It belongs to the UPF0260 family.

The protein is UPF0260 protein HI_1355 of Haemophilus influenzae (strain ATCC 51907 / DSM 11121 / KW20 / Rd).